Consider the following 804-residue polypeptide: Leucine--tRNA ligase (804 aa).

A 'HIGH' region motif is present at residues 40–51 (PYPSGQGLHVGH). A 'KMSKS' region motif is present at residues 576 to 580 (KMSKS). K579 contacts ATP.

It belongs to the class-I aminoacyl-tRNA synthetase family.

It is found in the cytoplasm. It catalyses the reaction tRNA(Leu) + L-leucine + ATP = L-leucyl-tRNA(Leu) + AMP + diphosphate. In Oceanobacillus iheyensis (strain DSM 14371 / CIP 107618 / JCM 11309 / KCTC 3954 / HTE831), this protein is Leucine--tRNA ligase.